A 468-amino-acid polypeptide reads, in one-letter code: Ubiquitin carboxyl-terminal hydrolase 17-like protein B (468 aa).

The tract at residues 1-20 (MVVALSFPEADPAMSPPSAP) is disordered. Residues 51–348 (CGLQNTGNSC…NAYVLFYVQQ (298 aa)) form the USP domain. The active-site Nucleophile is C60. The active-site Proton acceptor is H307. Positions 374–449 (KKSGEKKHNK…GGQNLRNTEG (76 aa)) are disordered. Residues 394 to 403 (CENREKRSSK) show a composition bias toward basic and acidic residues. Polar residues predominate over residues 422-434 (GQKQENTKLTPQE).

This sequence belongs to the peptidase C19 family. USP17 subfamily. Ubiquitinated. In terms of tissue distribution, detected in brain, heart, liver, lung, kidney, ovary and spleen.

It catalyses the reaction Thiol-dependent hydrolysis of ester, thioester, amide, peptide and isopeptide bonds formed by the C-terminal Gly of ubiquitin (a 76-residue protein attached to proteins as an intracellular targeting signal).. Its activity is regulated as follows. Inhibited by ubiquitin aldehyde. Functionally, deubiquitinating enzyme that removes conjugated ubiquitin from specific proteins to regulate different cellular processes. This chain is Ubiquitin carboxyl-terminal hydrolase 17-like protein B, found in Mus musculus (Mouse).